Here is a 319-residue protein sequence, read N- to C-terminus: Lipoyl synthase (319 aa).

The segment at 1-28 (MVVLVDTVSSTPVRPRHPEKAARPDALS) is disordered. Residues 16–28 (RHPEKAARPDALS) show a composition bias toward basic and acidic residues. [4Fe-4S] cluster-binding residues include Cys-61, Cys-66, Cys-72, Cys-87, Cys-91, Cys-94, and Ser-300. The region spanning 73–289 (WDKKHATFMI…AKTAYAKGFL (217 aa)) is the Radical SAM core domain.

The protein belongs to the radical SAM superfamily. Lipoyl synthase family. The cofactor is [4Fe-4S] cluster.

It localises to the cytoplasm. The catalysed reaction is [[Fe-S] cluster scaffold protein carrying a second [4Fe-4S](2+) cluster] + N(6)-octanoyl-L-lysyl-[protein] + 2 oxidized [2Fe-2S]-[ferredoxin] + 2 S-adenosyl-L-methionine + 4 H(+) = [[Fe-S] cluster scaffold protein] + N(6)-[(R)-dihydrolipoyl]-L-lysyl-[protein] + 4 Fe(3+) + 2 hydrogen sulfide + 2 5'-deoxyadenosine + 2 L-methionine + 2 reduced [2Fe-2S]-[ferredoxin]. The protein operates within protein modification; protein lipoylation via endogenous pathway; protein N(6)-(lipoyl)lysine from octanoyl-[acyl-carrier-protein]: step 2/2. Its function is as follows. Catalyzes the radical-mediated insertion of two sulfur atoms into the C-6 and C-8 positions of the octanoyl moiety bound to the lipoyl domains of lipoate-dependent enzymes, thereby converting the octanoylated domains into lipoylated derivatives. This chain is Lipoyl synthase, found in Rhodopseudomonas palustris (strain HaA2).